Reading from the N-terminus, the 79-residue chain is RNA-binding protein Hfq (79 aa).

The Sm domain occupies 10 to 70 (DVFLNTVRKQ…ISTIMPGQPV (61 aa)).

It belongs to the Hfq family. As to quaternary structure, homohexamer.

Functionally, RNA chaperone that binds small regulatory RNA (sRNAs) and mRNAs to facilitate mRNA translational regulation in response to envelope stress, environmental stress and changes in metabolite concentrations. Also binds with high specificity to tRNAs. The sequence is that of RNA-binding protein Hfq from Bartonella quintana (strain Toulouse) (Rochalimaea quintana).